The sequence spans 419 residues: MDKFRVQGPTTLQGEVTISGAKNAALPILFAALLAEEPVEIQNVPKLKDVDTSMKLLSQLGAKVERNGSVHIDASQVNVFCAPYDLVKTMRASIWALGPLVARFGQGQVSLPGGCTIGARPVDLHITGLEQLGATIKLEEGYVKASVDGRLKGAHIVMDKVSVGATVTIMCAATLAEGTTIIENAAREPEIVDTANFLVALGAKISGQGTDRITIEGVEHLGGGIYRVLPDRIETGTFLVAAAISRGKIICRNAQPDTLDAVLAKLRDAGADIEVGEDWISLDMHGKRPKAVNVRTAPHPAFPTDMQAQFTLLNLVAEGTGFITETVFENRFMHVPELSRMGARAEIESNTVICHGVETLSGAQVMATDLRASASLVLAGCIAEGTTVVDRIYHIDRGYERIEDKLRALGAHIERVKGE.

Residue Lys-22 to Asn-23 participates in phosphoenolpyruvate binding. Arg-91 provides a ligand contact to UDP-N-acetyl-alpha-D-glucosamine. Cys-115 (proton donor) is an active-site residue. Residue Cys-115 is modified to 2-(S-cysteinyl)pyruvic acid O-phosphothioketal. UDP-N-acetyl-alpha-D-glucosamine is bound by residues Arg-120–Leu-124, Lys-160–Val-163, Asp-305, and Val-327.

It belongs to the EPSP synthase family. MurA subfamily.

It is found in the cytoplasm. It carries out the reaction phosphoenolpyruvate + UDP-N-acetyl-alpha-D-glucosamine = UDP-N-acetyl-3-O-(1-carboxyvinyl)-alpha-D-glucosamine + phosphate. Its pathway is cell wall biogenesis; peptidoglycan biosynthesis. In terms of biological role, cell wall formation. Adds enolpyruvyl to UDP-N-acetylglucosamine. The polypeptide is UDP-N-acetylglucosamine 1-carboxyvinyltransferase (Salmonella arizonae (strain ATCC BAA-731 / CDC346-86 / RSK2980)).